A 601-amino-acid polypeptide reads, in one-letter code: Elongation factor 4 (601 aa).

In terms of domain architecture, tr-type G spans 5–187 (SNIRNFSIIA…AIVERLPAPE (183 aa)). GTP contacts are provided by residues 17-22 (DHGKST) and 134-137 (NKID).

It belongs to the TRAFAC class translation factor GTPase superfamily. Classic translation factor GTPase family. LepA subfamily.

It localises to the cell inner membrane. The enzyme catalyses GTP + H2O = GDP + phosphate + H(+). Functionally, required for accurate and efficient protein synthesis under certain stress conditions. May act as a fidelity factor of the translation reaction, by catalyzing a one-codon backward translocation of tRNAs on improperly translocated ribosomes. Back-translocation proceeds from a post-translocation (POST) complex to a pre-translocation (PRE) complex, thus giving elongation factor G a second chance to translocate the tRNAs correctly. Binds to ribosomes in a GTP-dependent manner. This chain is Elongation factor 4, found in Oleidesulfovibrio alaskensis (strain ATCC BAA-1058 / DSM 17464 / G20) (Desulfovibrio alaskensis).